The primary structure comprises 381 residues: tRNA pseudouridine synthase D (381 aa).

Catalysis depends on D81, which acts as the Nucleophile. One can recognise a TRUD domain in the interval 160-335; that stretch reads GMPNYFGPQR…TLGSRRFFWV (176 aa).

It belongs to the pseudouridine synthase TruD family.

The catalysed reaction is uridine(13) in tRNA = pseudouridine(13) in tRNA. Functionally, responsible for synthesis of pseudouridine from uracil-13 in transfer RNAs. The polypeptide is tRNA pseudouridine synthase D (Helicobacter pylori (strain Shi470)).